Reading from the N-terminus, the 534-residue chain is NAD(P)H-quinone oxidoreductase chain 4 1 (534 aa).

The next 14 helical transmembrane spans lie at 6–26 (IPWL…IPLI), 34–54 (IRWY…TAFW), 87–107 (LSMP…LAAW), 113–133 (PKLF…VFAV), 136–156 (LLLF…LISI), 169–189 (FILY…ALAF), 209–229 (ALEL…LPIF), 243–263 (SAPV…YGLI), 277–297 (FAPL…LTAF), 311–331 (ISHM…GMNG), 332–352 (AVLQ…LSGV), 376–396 (FAMF…SGFV), 418–438 (IAIF…LSML), and 464–484 (IFVA…PKLA).

It belongs to the complex I subunit 4 family.

It is found in the cellular thylakoid membrane. It catalyses the reaction a plastoquinone + NADH + (n+1) H(+)(in) = a plastoquinol + NAD(+) + n H(+)(out). It carries out the reaction a plastoquinone + NADPH + (n+1) H(+)(in) = a plastoquinol + NADP(+) + n H(+)(out). Its function is as follows. NDH-1 shuttles electrons from NAD(P)H, via FMN and iron-sulfur (Fe-S) centers, to quinones in the respiratory chain. The immediate electron acceptor for the enzyme in this species is believed to be plastoquinone. Couples the redox reaction to proton translocation (for every two electrons transferred, four hydrogen ions are translocated across the cytoplasmic membrane), and thus conserves the redox energy in a proton gradient. This Picosynechococcus sp. (strain ATCC 27264 / PCC 7002 / PR-6) (Agmenellum quadruplicatum) protein is NAD(P)H-quinone oxidoreductase chain 4 1.